Reading from the N-terminus, the 153-residue chain is Small ribosomal subunit protein bS16 (153 aa).

Residues 130 to 153 (EAEAAAAAEEAPAEEAAEEAPAEA) form a disordered region. Over residues 140-153 (APAEEAAEEAPAEA) the composition is skewed to acidic residues.

This sequence belongs to the bacterial ribosomal protein bS16 family.

The chain is Small ribosomal subunit protein bS16 from Bifidobacterium longum subsp. infantis (strain ATCC 15697 / DSM 20088 / JCM 1222 / NCTC 11817 / S12).